The chain runs to 190 residues: Dynein axonemal light chain 1 (190 aa).

Residue Ala-2 is modified to N-acetylalanine. 4 LRR repeats span residues 49–70 (NCEK…NGLK), 71–92 (NLRI…EAVG), 94–115 (TLEE…HIMK), and 116–137 (KLKI…VKLA). Ser-56 carries the phosphoserine modification. The region spanning 150 to 190 (NPLEEKHSAENNWIEEATKRVPKLKKLDGTPVIKGDEEEDN) is the LRRCT domain.

It belongs to the dynein light chain LC1-type family. As to quaternary structure, interacts with ZMYND10 (via C-terminus). Interacts with DNAH5, a outer arm dynein heavy chain. Interacts with tubulin located within the A-tubule of the outer doublets in a ATP-independent manner. In terms of tissue distribution, expressed in tissues carrying motile cilia such as respiratory epithelia, ependyma and testis.

It is found in the cytoplasm. It localises to the cytoskeleton. The protein resides in the cilium axoneme. Functionally, part of the multisubunit axonemal ATPase complexes that generate the force for cilia motility and govern beat frequency. Component of the outer arm dynein (ODA). May be involved in a mechanosensory feedback mechanism controlling ODA activity based on external conformational cues by tethering the outer arm dynein heavy chain (DNAH5) to the microtubule within the axoneme. Important for ciliary function in the airways and for the function of the cilia that produce the nodal flow essential for the determination of the left-right asymmetry. In Homo sapiens (Human), this protein is Dynein axonemal light chain 1.